Reading from the N-terminus, the 518-residue chain is MAETSLLEAGASAASTAAALENLQVEASCSVCLEYLKEPVIIECGHNFCKACITRWWEDLERDFPCPVCRKTSRYRSLRPNRQLGSMVEIAKQLQAVKRKIRDESLCPQHHEALSLFCYEDQEAVCLICAISHTHRAHTVVPLDDATQEYKEKLQKCLEPLEQKLQEITRCKSSEEKKPGELKRLVESRRQQILREFEELHRRLDEEQQVLLSRLEEEEQDILQRLRENAAHLGDKRRDLAHLAAEVEGKCLQSGFEMLKDVKSTLEKNIPRKFGGSLSTICPRDHKALLGLVKEINRCEKVKTMEVTSVSIELEKNFSNFPRQYFALRKILKQLIADVTLDPETAHPNLVLSEDRKSVKFVETRLRDLPDTPRRFTFYPCVLATEGFTSGRHYWEVEVGDKTHWAVGVCRDSVSRKGELTPLPETGYWRVRLWNGDKYAATTTPFTPLHIKVKPKRVGIFLDYEAGTLSFYNVTDRSHIYTFTDTFTEKLWPLFYPGIRAGRKNAAPLTIRPPTDWE.

The RING-type zinc-finger motif lies at 29–70 (CSVCLEYLKEPVIIECGHNFCKACITRWWEDLERDFPCPVCR). The B box-type zinc-finger motif lies at 102–143 (RDESLCPQHHEALSLFCYEDQEAVCLICAISHTHRAHTVVPL). 4 residues coordinate Zn(2+): Cys107, His110, Cys129, and His135. Residues 181–250 (ELKRLVESRR…AHLAAEVEGK (70 aa)) are a coiled coil. 2 interaction with CDKN1A regions span residues 268–337 (KNIP…QLIA) and 389–518 (TSGR…TDWE). In terms of domain architecture, B30.2/SPRY spans 319-514 (SNFPRQYFAL…NAAPLTIRPP (196 aa)).

It belongs to the TRIM/RBCC family. As to quaternary structure, isoform 1 interacts with MOAP1. Isoform 1 and isoform 2 interact with CDKN1A. Isoform 2 interacts (via domain B box-type) with CACTIN. In terms of processing, autoubiquitinated. As to expression, ubiquitous; highly expressed in brain, heart, kidney, liver, skeletal muscle, spleen and testis.

It localises to the cytoplasm. Its subcellular location is the cytosol. The protein resides in the mitochondrion. The protein localises to the nucleus. It carries out the reaction S-ubiquitinyl-[E2 ubiquitin-conjugating enzyme]-L-cysteine + [acceptor protein]-L-lysine = [E2 ubiquitin-conjugating enzyme]-L-cysteine + N(6)-ubiquitinyl-[acceptor protein]-L-lysine.. Its pathway is protein modification; protein ubiquitination. Functionally, E3 ubiquitin-protein ligase. May facilitate apoptosis by inhibiting APC/C-Cdh1-mediated poly-ubiquitination and subsequent proteasome-mediated degradation of the pro-apoptotic protein MOAP1. Regulates the G1/S transition of the cell cycle and DNA damage-induced G2 arrest by stabilizing CDKN1A/p21. Positively regulates CDKN1A/p21 stability by competing with DTL for CDKN1A/p21 binding, therefore disrupting DCX(DTL) E3 ubiquitin ligase complex-mediated CDKN1A/p21 ubiquitination and degradation. In terms of biological role, regulates the G1/S transition of the cell cycle and DNA damage-induced G2 arrest by stabilizing CDKN1A/p21. Positively regulates CDKN1A/p21 stability by competing with DTL for CDKN1A/p21 binding, therefore disrupting DCX(DTL) E3 ubiquitin ligase complex-mediated CDKN1A/p21 ubiquitination and degradation. Negatively regulates the canonical NF-kappa-B signaling pathway via stabilization of CACTIN in an ubiquitination-independent manner. The polypeptide is E3 ubiquitin-protein ligase TRIM39 (TRIM39) (Homo sapiens (Human)).